We begin with the raw amino-acid sequence, 370 residues long: Pyruvate dehydrogenase E1 component subunit alpha (370 aa).

Heterodimer of an alpha and a beta chain. Requires thiamine diphosphate as cofactor.

It catalyses the reaction N(6)-[(R)-lipoyl]-L-lysyl-[protein] + pyruvate + H(+) = N(6)-[(R)-S(8)-acetyldihydrolipoyl]-L-lysyl-[protein] + CO2. Its function is as follows. The pyruvate dehydrogenase complex catalyzes the overall conversion of pyruvate to acetyl-CoA and CO(2). It contains multiple copies of three enzymatic components: pyruvate dehydrogenase (E1), dihydrolipoamide acetyltransferase (E2) and lipoamide dehydrogenase (E3). The sequence is that of Pyruvate dehydrogenase E1 component subunit alpha (pdhA) from Staphylococcus aureus (strain MRSA252).